The following is a 1183-amino-acid chain: 3-hydroxy-3-methylglutaryl-coenzyme A reductase (1183 aa).

Over Met-1 to Asp-245 the chain is Cytoplasmic. An SSD domain is found at Asp-245–Ile-426. A helical transmembrane segment spans residues Ile-246–Ser-266. Residues Met-267–Lys-273 lie on the Lumenal side of the membrane. The chain crosses the membrane as a helical span at residues Phe-274–Val-294. The Cytoplasmic segment spans residues Thr-295–Gly-299. Residues Val-300 to Phe-320 form a helical membrane-spanning segment. Topologically, residues Glu-321 to Asp-378 are lumenal. The chain crosses the membrane as a helical span at residues Tyr-379–Gln-399. The Cytoplasmic segment spans residues Gln-400 to Cys-402. A helical transmembrane segment spans residues Phe-403–Ile-423. Residues Leu-424–Lys-482 lie on the Lumenal side of the membrane. A helical transmembrane segment spans residues Phe-483–Pro-503. Residues Phe-504–Arg-1183 lie on the Cytoplasmic side of the membrane. Glu-828 (charge relay system) is an active-site residue. Ser-834–Lys-840 contributes to the CoA binding site. NADP(+)-binding positions include Ser-895–Phe-897 and Asp-922–Ser-930. The active-site Charge relay system is the Lys-962. Val-991–Lys-993 lines the CoA pocket. Asp-1038 acts as the Charge relay system in catalysis. Ala-1133–His-1134 contacts CoA. His-1134 acts as the Proton donor in catalysis. The tract at residues Gln-1136 to Arg-1183 is disordered. Position 1138-1139 (Asn-1138–Arg-1139) interacts with NADP(+). Low complexity-rich tracts occupy residues Arg-1139 to Thr-1148 and Ser-1167 to Ala-1177.

It belongs to the HMG-CoA reductase family.

Its subcellular location is the endoplasmic reticulum membrane. The enzyme catalyses (R)-mevalonate + 2 NADP(+) + CoA = (3S)-3-hydroxy-3-methylglutaryl-CoA + 2 NADPH + 2 H(+). Its pathway is metabolic intermediate biosynthesis; (R)-mevalonate biosynthesis; (R)-mevalonate from acetyl-CoA: step 3/3. HMG-CoA reductase; part of the first module of ergosterol biosynthesis pathway that includes the early steps of the pathway, conserved across all eukaryotes, and which results in the formation of mevalonate from acetyl-coenzyme A (acetyl-CoA). In this module, the cytosolic acetyl-CoA acetyltransferase catalyzes the formation of acetoacetyl-CoA. The hydroxymethylglutaryl-CoA synthase then condenses acetyl-CoA with acetoacetyl-CoA to form HMG-CoA. The rate-limiting step of the early module is the reduction to mevalonate by the 3-hydroxy-3-methylglutaryl-coenzyme A (HMG-CoA) reductase HMGR. In Gibberella fujikuroi (strain CBS 195.34 / IMI 58289 / NRRL A-6831) (Bakanae and foot rot disease fungus), this protein is 3-hydroxy-3-methylglutaryl-coenzyme A reductase (HMGR).